We begin with the raw amino-acid sequence, 281 residues long: NADH-quinone oxidoreductase subunit B (281 aa).

[4Fe-4S] cluster is bound by residues cysteine 37, cysteine 38, cysteine 103, and cysteine 132. The disordered stretch occupies residues 242–281 (DAKPLDESRAHGPGPTTADIADAADTADSDAAPGATHDTP). Over residues 257–281 (TTADIADAADTADSDAAPGATHDTP) the composition is skewed to low complexity.

This sequence belongs to the complex I 20 kDa subunit family. In terms of assembly, NDH-1 is composed of 14 different subunits. Subunits NuoB, C, D, E, F, and G constitute the peripheral sector of the complex. The cofactor is [4Fe-4S] cluster.

The protein resides in the cell membrane. It carries out the reaction a quinone + NADH + 5 H(+)(in) = a quinol + NAD(+) + 4 H(+)(out). NDH-1 shuttles electrons from NADH, via FMN and iron-sulfur (Fe-S) centers, to quinones in the respiratory chain. The immediate electron acceptor for the enzyme in this species is believed to be a menaquinone. Couples the redox reaction to proton translocation (for every two electrons transferred, four hydrogen ions are translocated across the cytoplasmic membrane), and thus conserves the redox energy in a proton gradient. The chain is NADH-quinone oxidoreductase subunit B from Frankia alni (strain DSM 45986 / CECT 9034 / ACN14a).